Reading from the N-terminus, the 558-residue chain is MAKLLSCVLGPRLYKIYRERDSERAPASVPETPTAVTAPHSSSWDTYYQPRALEKHADSILALASVFWSISYYSSPFAFFYLYRKGYLSLSKVVPFSHYAGTLLLLLAGVACLRGIGRWTNPQYRQFITILEATHRNQSSENKRQLANYNFDFRSWPVDFHWEEPSSRKESRGGPSRRGVALLRPEPLHRGTADTLLNRVKKLPCQITSYLVAHTLGRRMLYPGSVYLLQKALMPVLLQGQARLVEECNGRRAKLLACDGNEIDTMFVDRRGTAQPQGQKLVICCEGNAGFYEVGCISTPLEAGYSVLGWNHPGFAGSTGVPFPQNEANAMDVVVQFAIHRLGFQPQDIIIYAWSIGGFTATWAAMSYPDVSAVILDASFDDLVPLALKVMPDSWRGLVTRTVRQHLNLNNAEQLCRYLGPVLLIRRTKDEIITTTVPEDIMSNRGNDLLLKLLQHRYPRVMAEEGLQVVRQWLEASSQLEEASIYSRWEVEEDWCLSVLRSYQAEHGPDFPWSVGEDMSADGRRQLALFLARKHLHNFEATHCTPLPAQNFQMPWHL.

A run of 2 helical transmembrane segments spans residues 60-80 (ILAL…FAFF) and 93-113 (VVPF…VACL). Residues 114-558 (RGIGRWTNPQ…AQNFQMPWHL (445 aa)) lie on the Cytoplasmic side of the membrane. Positions 281–407 (LVICCEGNAG…LVTRTVRQHL (127 aa)) constitute an AB hydrolase-1 domain. Active-site charge relay system residues include Ser-355, Asp-430, and His-507.

This sequence belongs to the AB hydrolase superfamily. ABHD16 family.

The protein localises to the membrane. It catalyses the reaction 1-heptadecanoyl-2-(5Z,8Z,11Z,14Z-eicosatetraenoyl)-sn-glycero-3-phosphoserine + H2O = 1-heptadecanoyl-sn-glycero-3-phosphoserine + (5Z,8Z,11Z,14Z)-eicosatetraenoate + H(+). The catalysed reaction is 1-hexadecanoyl-2-(9Z-octadecenoyl)-sn-glycero-3-phospho-L-serine + H2O = 1-hexadecanoyl-sn-glycero-3-phospho-L-serine + (9Z)-octadecenoate + H(+). It carries out the reaction 1-octadecanoyl-2-(9Z,12Z-octadecadienoyl)-sn-glycero-3-phosphoserine + H2O = 1-octadecanoyl-sn-glycero-3-phosphoserine + (9Z,12Z)-octadecadienoate + H(+). The enzyme catalyses 1-heptadecanoyl-2-(5Z,8Z,11Z,14Z-eicosatetraenoyl)-sn-glycero-3-phosphocholine + H2O = 1-heptadecanoyl-sn-glycero-3-phosphocholine + (5Z,8Z,11Z,14Z)-eicosatetraenoate + H(+). It catalyses the reaction 1-hexadecanoyl-2-(9Z-octadecenoyl)-sn-glycero-3-phosphoglycerol + H2O = 1-hexadecanoyl-sn-glycero-3-phosphoglycerol + (9Z)-octadecenoate + H(+). The catalysed reaction is 1-hexadecanoyl-2-(9Z-octadecenoyl)-sn-glycero-3-phospho-(1D-myo-inositol) + H2O = 1-hexadecanoyl-sn-glycero-3-phospho-(1D-myo-inositol) + (9Z)-octadecenoate + H(+). It carries out the reaction 1-heptadecanoyl-2-(5Z,8Z,11Z,14Z-eicosatetraenoyl)-sn-glycero-3-phosphoethanolamine + H2O = 1-heptadecanoyl-sn-glycero-3-phosphoethanolamine + (5Z,8Z,11Z,14Z)-eicosatetraenoate + H(+). The enzyme catalyses 1-hexadecanoyl-2-(9Z-octadecenoyl)-sn-glycero-3-phospho-(1'-sn-glycerol) + H2O = 1-hexadecanoyl-sn-glycero-3-phospho-(1'-sn-glycerol) + (9Z)-octadecenoate + H(+). It catalyses the reaction Hydrolyzes glycerol monoesters of long-chain fatty acids.. The catalysed reaction is 1-tetradecanoylglycerol + H2O = tetradecanoate + glycerol + H(+). It carries out the reaction 2-hexadecanoylglycerol + H2O = glycerol + hexadecanoate + H(+). The enzyme catalyses 1-(9Z-octadecenoyl)-glycerol + H2O = glycerol + (9Z)-octadecenoate + H(+). It catalyses the reaction 2-(9Z-octadecenoyl)-glycerol + H2O = glycerol + (9Z)-octadecenoate + H(+). The catalysed reaction is 2-(9Z,12Z-octadecadienoyl)-glycerol + H2O = (9Z,12Z)-octadecadienoate + glycerol + H(+). It carries out the reaction 1-(5Z,8Z,11Z,14Z-eicosatetraenoyl)-glycerol + H2O = glycerol + (5Z,8Z,11Z,14Z)-eicosatetraenoate + H(+). The enzyme catalyses 2-(5Z,8Z,11Z,14Z-eicosatetraenoyl)-glycerol + H2O = glycerol + (5Z,8Z,11Z,14Z)-eicosatetraenoate + H(+). It catalyses the reaction prostaglandin D2-1-glycerol ester + H2O = prostaglandin D2 + glycerol + H(+). The catalysed reaction is 2-glyceryl-15-deoxy-Delta(12,14)-prostaglandin J2 + H2O = 15-deoxy-Delta(12,14)-prostaglandin J2 + glycerol + H(+). It carries out the reaction 1-(9Z,12Z-octadecadienoyl)-glycerol + H2O = (9Z,12Z)-octadecadienoate + glycerol + H(+). Phosphatidylserine (PS) lipase that mediates the hydrolysis of phosphatidylserine to generate lysophosphatidylserine (LPS). LPS constitutes a class of signaling lipids that regulates immunological and neurological processes. Has no activity towards diacylglycerol, triacylglycerol or lysophosphatidylserine lipase. Also has monoacylglycerol lipase activity, with preference for 1-(9Z,12Z-octadecadienoyl)-glycerol (1-LG) and 2-glyceryl-15-deoxy-Delta(12,14)-prostaglandin J2 (15d-PGJ(2)-G). The protein is Phosphatidylserine lipase ABHD16A of Macaca fascicularis (Crab-eating macaque).